Here is a 224-residue protein sequence, read N- to C-terminus: N-(5'-phosphoribosyl)anthranilate isomerase (224 aa).

It belongs to the TrpF family.

It carries out the reaction N-(5-phospho-beta-D-ribosyl)anthranilate = 1-(2-carboxyphenylamino)-1-deoxy-D-ribulose 5-phosphate. The protein operates within amino-acid biosynthesis; L-tryptophan biosynthesis; L-tryptophan from chorismate: step 3/5. The protein is N-(5'-phosphoribosyl)anthranilate isomerase of Sinorhizobium fredii (strain NBRC 101917 / NGR234).